A 114-amino-acid polypeptide reads, in one-letter code: Large ribosomal subunit protein uL22 (114 aa).

The protein belongs to the universal ribosomal protein uL22 family. As to quaternary structure, part of the 50S ribosomal subunit.

In terms of biological role, this protein binds specifically to 23S rRNA; its binding is stimulated by other ribosomal proteins, e.g. L4, L17, and L20. It is important during the early stages of 50S assembly. It makes multiple contacts with different domains of the 23S rRNA in the assembled 50S subunit and ribosome. Its function is as follows. The globular domain of the protein is located near the polypeptide exit tunnel on the outside of the subunit, while an extended beta-hairpin is found that lines the wall of the exit tunnel in the center of the 70S ribosome. In Streptococcus agalactiae serotype Ia (strain ATCC 27591 / A909 / CDC SS700), this protein is Large ribosomal subunit protein uL22.